The primary structure comprises 387 residues: MATRASTSSRVSPAFTFLVIFFLLSLTASVEAAGRGVNNDKKGGGLGASFIFGDSLVDAGNNNYLSTLSRANMKPNGIDFKASGGTPTGRFTNGRTIGDIVGEELGSANYAIPFLAPDAKGKALLAGVNYASGGGGIMNATGRIFVNRLGMDVQVDFFNTTRKQFDDLLGKEKAKDYIAKKSIFSITIGANDFLNNYLFPLLSVGTRFTQTPDDFIGDMLEHLRDQLTRLYQLDARKFVIGNVGPIGCIPYQKTINQLDENECVDLANKLANQYNVRLKSLLEELNKKLPGAMFVHANVYDLVMELITNYDKYGFKSATKACCGNGGQYAGIIPCGPTSSLCEERDKYVFWDPYHPSEAANVIIAKQLLYGDVKVISPVNLSKLRDM.

A signal peptide spans 1 to 32 (MATRASTSSRVSPAFTFLVIFFLLSLTASVEA). Serine 55 (nucleophile) is an active-site residue. N-linked (GlcNAc...) asparagine glycans are attached at residues asparagine 139 and asparagine 159. Catalysis depends on residues aspartate 352 and histidine 355. An N-linked (GlcNAc...) asparagine glycan is attached at asparagine 380.

The protein belongs to the 'GDSL' lipolytic enzyme family.

It localises to the secreted. This is GDSL esterase/lipase At2g23540 from Arabidopsis thaliana (Mouse-ear cress).